The sequence spans 723 residues: Transmembrane channel-like protein 7 (723 aa).

2 disordered regions span residues 1–28 (MSESSGSALQPGRPSRQPAVHPENLSLD) and 51–71 (RRRTTVHSRDKQSGTLLKPTD). The Extracellular portion of the chain corresponds to 1 to 168 (MSESSGSALQ…GIQSYFSFLR (168 aa)). A glycan (N-linked (GlcNAc...) asparagine) is linked at Asn24. N-linked (GlcNAc...) asparagine glycosylation is present at Asn84. Ser89 is modified (phosphoserine). Asn96 is a glycosylation site (N-linked (GlcNAc...) asparagine). A helical membrane pass occupies residues 169 to 189 (FLVLLNLVIFLIIFMLVLLPV). Residues 190–219 (LLTKYKITNSSFVLIPFKDMDKQCTVYPVS) are Cytoplasmic-facing. A helical transmembrane segment spans residues 220-240 (SSGLIYFYSYIIDLLSGTGFL). Topologically, residues 241 to 263 (EETSLFYGHYTIDGVKFQNFTYD) are extracellular. Asn259 carries N-linked (GlcNAc...) asparagine glycosylation. Residues 264–284 (LPLAYLLSTIASLALSLLWIV) traverse the membrane as a helical segment. The Cytoplasmic portion of the chain corresponds to 285–362 (KRSVEGFKIN…EETIRIYSLR (78 aa)). Residues 363 to 383 (LFLNCIVLAVLGACFYAIYVA) form a helical membrane-spanning segment. Over 384–404 (TVFSQEHMKKEIDKMVFGENL) the chain is Extracellular. A helical transmembrane segment spans residues 405–425 (FILYLPSIVITLANFITPMIF). Topologically, residues 426 to 494 (AKIIRYEDYS…PCWETQVGQE (69 aa)) are cytoplasmic. Residues 495–515 (MYKLMIFDFIIILAVTLFVDF) form a helical membrane-spanning segment. At 516-555 (PRKLLVTYCSSCKLIQCWGQQEFAIPDNVLGIVYGQTICW) the chain is on the extracellular side. Residues 556–576 (IGAFFSPLLPAIATLKFIIIF) traverse the membrane as a helical segment. The Cytoplasmic segment spans residues 577-601 (YVKEWSLLYTCRPSPRPFRASNSNF). A helical membrane pass occupies residues 602–622 (FFLLVLLIGLCLAIIPLTISI). At 623–665 (SRIPSSKACGPFTNFNTTWEVIPKTVSTFPSSLQSFIHGVTSE) the chain is on the extracellular side. Asn638 carries an N-linked (GlcNAc...) asparagine glycan. Residues 666 to 686 (AFAVPFFMIICLIMFYFIALA) traverse the membrane as a helical segment. Over 687–723 (GAHKRVVIQLREQLSLESRDKCYLIQKLTEAQRDMRN) the chain is Cytoplasmic.

It belongs to the TMC family. In terms of assembly, interacts with PIEZO2; the interaction inhibits PIEZO2-conducted mechanically activated currents.

It localises to the membrane. Its function is as follows. Acts as an inhibitory modulator of PIEZO2 mechanosensitive channel in dorsal root ganglion (DRG) neurons through physical interactions or interference with the interaction between PIEZO2 and the cytoskeleton. The polypeptide is Transmembrane channel-like protein 7 (Homo sapiens (Human)).